A 731-amino-acid chain; its full sequence is Probable G-protein coupled receptor 149 (731 aa).

Residues 1 to 35 are Extracellular-facing; sequence MSLFLSNLSTNDSSLWKENHNSTDLLNPPGTLNIY. Residues Asn-7, Asn-11, and Asn-21 are each glycosylated (N-linked (GlcNAc...) asparagine). Residues 36–56 form a helical membrane-spanning segment; that stretch reads LFCLTCLMTFAALVGSIYSLI. At 57–69 the chain is on the cytoplasmic side; it reads SLLKMQNRTVVSM. A helical membrane pass occupies residues 70 to 90; that stretch reads LVASWSVDDLMSVLSVTIFMF. Residues 91 to 109 lie on the Extracellular side of the membrane; the sequence is LQWPNEVPGYFQFLCTTSA. Cys-105 and Cys-182 are disulfide-bonded. The chain crosses the membrane as a helical span at residues 110 to 132; the sequence is LMYLCQGLSSNLKATLLVSYNFY. At 133–155 the chain is on the cytoplasmic side; it reads TMHRGVGSQTASRRSGQVLGVVL. The helical transmembrane segment at 156 to 176 threads the bilayer; that stretch reads TVWAASLLLSALPLCGWGAFV. Residues 177 to 189 lie on the Extracellular side of the membrane; that stretch reads RTPWGCLVDCSSS. The helical transmembrane segment at 190-210 threads the bilayer; that stretch reads YVLFLSIVYALAFGLLVGLSV. The Cytoplasmic segment spans residues 211–310; the sequence is PLTHRLLCSE…SFTVSVAQKR (100 aa). Positions 234–271 are disordered; sequence RGASIPGTPPTAGRVVSLSPEDAPGPSLRRSGGCSPSS. Residues 311–331 form a helical membrane-spanning segment; that stretch reads FALILALTKVVLWLPMMMHMV. At 332–342 the chain is on the extracellular side; it reads VQNVVGFQSLP. A helical membrane pass occupies residues 343–363; the sequence is LETFSFLLTLLATTVTPVFVL. Topologically, residues 364 to 731 are cytoplasmic; sequence SKRWTHLPCG…RKREEESKGS (368 aa). Residues 475-526 are disordered; the sequence is NTDITEAKQDSNNKKDAFSDKTGGDINYEETTFSEGPERRLSHEESQKPDLS. Basic and acidic residues-rich tracts occupy residues 479-497 and 510-526; these read TEAK…DKTG and GPER…PDLS.

Belongs to the G-protein coupled receptor 1 family.

It localises to the cell membrane. Orphan receptor. The protein is Probable G-protein coupled receptor 149 (GPR149) of Homo sapiens (Human).